We begin with the raw amino-acid sequence, 152 residues long: Transcriptional regulator MraZ (152 aa).

2 consecutive SpoVT-AbrB domains span residues 5-52 (ATLV…TLPE) and 81-124 (ASEC…DEQV).

The protein belongs to the MraZ family. As to quaternary structure, forms oligomers.

The protein resides in the cytoplasm. It is found in the nucleoid. Functionally, negatively regulates its own expression and that of the subsequent genes in the proximal part of the division and cell wall (dcw) gene cluster. Acts by binding directly to DNA. May also regulate the expression of genes outside the dcw cluster. The polypeptide is Transcriptional regulator MraZ (Proteus mirabilis (strain HI4320)).